Here is a 119-residue protein sequence, read N- to C-terminus: Phosphoribosyl-AMP cyclohydrolase (119 aa).

Residue D77 coordinates Mg(2+). C78 is a Zn(2+) binding site. Mg(2+) is bound by residues D79 and D81. Zn(2+) contacts are provided by C94 and C101.

The protein belongs to the PRA-CH family. In terms of assembly, homodimer. Mg(2+) is required as a cofactor. Requires Zn(2+) as cofactor.

It localises to the cytoplasm. It carries out the reaction 1-(5-phospho-beta-D-ribosyl)-5'-AMP + H2O = 1-(5-phospho-beta-D-ribosyl)-5-[(5-phospho-beta-D-ribosylamino)methylideneamino]imidazole-4-carboxamide. Its pathway is amino-acid biosynthesis; L-histidine biosynthesis; L-histidine from 5-phospho-alpha-D-ribose 1-diphosphate: step 3/9. In terms of biological role, catalyzes the hydrolysis of the adenine ring of phosphoribosyl-AMP. The protein is Phosphoribosyl-AMP cyclohydrolase of Cereibacter sphaeroides (strain ATCC 17023 / DSM 158 / JCM 6121 / CCUG 31486 / LMG 2827 / NBRC 12203 / NCIMB 8253 / ATH 2.4.1.) (Rhodobacter sphaeroides).